The primary structure comprises 1453 residues: MIESENLNQEEIIKELCLCNGLSYEMVGQEGSDTSKLEMFFLGYPRIVGLSLFPNLTSLTIVAQDIKEISGLEPCLQLKELWIAECCIEKIEGLQECRNLEKLYLYFNKISKIENLEKLIKLKVLWLNHNTIKNIEGLQTLKNLKDLNLAGNLINSIGRCLDSNEQLERLNLSGNQICSFKELTNLTRLPCLKDLCLNDPQYTTNPVCLLCNYSTHVLYHLPCLQRFDTLDVSAKQIKELADTTAMKKIMYYNMRIKTLQRHLKEDLEKLNDQKCKLQKLPEERVKLFSFVKKTLERELAELKGSGKGHSDGSNNSKVTDPETLKSCETVTEEPSLQQKILAKLNALNERVTFWNKKLDEIEAIYHIEVKQKKKSHGLLIPLLLIELETVGNFHFEEGTRSDDWFNFCYELILSRFCAWDFRTYGITGVKVKRIIKVNNRILRLKFEEKFQKFLENEDMHDSESYRRMLECLFYVFDPEVSVKKKHLLQILEKGFKDSETSKLPLKKEAIIVSNSLSISECPRIEFLQQKHKDEKKISLKHELFRHGILLITKVFLGQSVQAHEKESISQSNYPMVNSVFIPRKYLLNSVMGQRNCDCSVRQCKWFVFDHDLVLPEYVVEFEYITMVKAPSLFSVFNNVILEESKKNPEVSVFSKDLKFDDEVIKMEPRIKARPKLISLDDKTILSLAKTSVYSHIVSLNLHGNSLSKLRDLSKLTGLRKLNISFNEFTCLDDVYHLYNLEYLDASHNHVITLEGFRGLMKLKHLDLSWNQLKKSGNEINMLCKHTTSLLTLDIQHNPWQKPATLRLSVIGRLKTLTHLNGVFISEEEATAAMKFIAGTRITQLSLLRHSSTKEERPRILSIWPSAKILTQVSKLGPHLHLSGNCYLKITALNLDGQHLFEITNLEKLENLKWASFSNNNLTKMEGLESCINLEELTLDGNCISKIEGISKMTKLTRLSINNNLLTGWEEHTFDNMLHLHSLSLENNRITSLSGLQKSFTLVELYISNNYIAVNQEMHNLKGLCNLVILDMCGNIIIWNQENYRLFVIFHLPELKALDGIPIEPSETDSAKDLFGGRLTSDMIAERQGHSNFKQMQELNWTSSSIRTVDLIPVDQFRNVCNVNLQNNHLTSFSGLIYLPNVKVLCLNYNHIESIMPRLKPQTHLTSRQLLYQKVPSSGYGQQGISKTNRDIMSSENLPPIMHSLEVLHLGYNGICNLIQLQLNRLRNLKFLFLQGNEISQVEGLDNLVVLQELVVDHNRIRSFNDSAFAKPSSLLALHLEENRLRELGKLQSLVKLEKLFLGYNKIQDITELEKLDVISTLRELTVYGNPICRKMLHRHMLIFRLPNLQMLDGSPVNSDDRAKAEFHLAELQAKKNSLIPVTHSPMDGRSFGQVKTPPIEITNVLLPSGFSHYLGSDVTLTPEVEEFLGATFQDQIECNCLKRNEHTPRNSPV.

LRR repeat units follow at residues 53-78 (FPNLTSLTIVAQDIKEISGLEPCLQL), 97-119 (CRNLEKLYLYFNKISKIENLEKL), 120-141 (IKLKVLWLNHNTIKNIEGLQTL), 142-164 (KNLKDLNLAGNLINSIGRCLDSN), 166-188 (QLERLNLSGNQICSFKELTNLTR), 224-248 (LQRFDTLDVSAKQIKELADTTAMKK), and 264-287 (KEDLEKLNDQKCKLQKLPEERVKL). The tract at residues 302 to 321 (LKGSGKGHSDGSNNSKVTDP) is disordered. 23 LRR repeats span residues 344–367 (LNALNERVTFWNKKLDEIEAIYHI), 671–693 (KARPKLISLDDKTILSLAKTSVY), 694–715 (SHIVSLNLHGNSLSKLRDLSKL), 716–737 (TGLRKLNISFNEFTCLDDVYHL), 739–758 (NLEYLDASHNHVITLEGFRG), 759–784 (LMKLKHLDLSWNQLKKSGNEINMLCK), 786–812 (TTSLLTLDIQHNPWQKPATLRLSVIGR), 886–908 (YLKITALNLDGQHLFEITNLEKL), 909–930 (ENLKWASFSNNNLTKMEGLESC), 931–952 (INLEELTLDGNCISKIEGISKM), 953–975 (TKLTRLSINNNLLTGWEEHTFDN), 976–1001 (MLHLHSLSLENNRITSLSGLQKSFTL), 1023–1048 (LCNLVILDMCGNIIIWNQENYRLFVI), 1092–1115 (FKQMQELNWTSSSIRTVDLIPVDQ), 1116–1138 (FRNVCNVNLQNNHLTSFSGLIYL), 1139–1161 (PNVKVLCLNYNHIESIMPRLKPQ), 1201–1224 (MHSLEVLHLGYNGICNLIQLQLNR), 1225–1247 (LRNLKFLFLQGNEISQVEGLDNL), 1248–1270 (VVLQELVVDHNRIRSFNDSAFAK), 1272–1292 (SSLLALHLEENRLRELGKLQS), 1293–1317 (LVKLEKLFLGYNKIQDITELEKLDV), 1319–1345 (STLRELTVYGNPICRKMLHRHMLIFRL), and 1365–1388 (EFHLAELQAKKNSLIPVTHSPMDG).

The sequence is that of Leucine-rich repeat-containing protein 9 (LRRC9) from Homo sapiens (Human).